The primary structure comprises 283 residues: Non-selective voltage-gated ion channel VDAC1 (283 aa).

An N-acetylalanine modification is found at alanine 2. Lysine 12 contacts ATP. Lysine 12 participates in a covalent cross-link: Glycyl lysine isopeptide (Lys-Gly) (interchain with G-Cter in ubiquitin). A Phosphoserine modification is found at serine 13. A Phosphothreonine modification is found at threonine 19. Residue lysine 20 participates in ATP binding. Lysine 20 is modified (N6-acetyllysine; alternate). N6-succinyllysine; alternate is present on lysine 20. Lysine 20 is covalently cross-linked (Glycyl lysine isopeptide (Lys-Gly) (interchain with G-Cter in ubiquitin); alternate). Transmembrane regions (beta stranded) follow at residues 26–35 (LIKLDLKTKS) and 39–47 (LEFTSSGSA). Glycyl lysine isopeptide (Lys-Gly) (interchain with G-Cter in ubiquitin) cross-links involve residues lysine 53 and lysine 61. A beta stranded transmembrane segment spans residues 54 to 64 (VTGSLETKYRW). Tyrosine 67 carries the phosphotyrosine modification. Transmembrane regions (beta stranded) follow at residues 69–76 (LTFTEKWN), 80–89 (TLGTEITVED), and 95–104 (LKLTFDSSFS). Phosphothreonine is present on threonine 107. Residue lysine 109 is modified to N6-acetyllysine; alternate. Lysine 109 participates in a covalent cross-link: Glycyl lysine isopeptide (Lys-Gly) (interchain with G-Cter in ubiquitin); alternate. Residue lysine 110 forms a Glycyl lysine isopeptide (Lys-Gly) (interchain with G-Cter in ubiquitin) linkage. Beta stranded transmembrane passes span 111-120 (NAKIKTGYKR), 123-130 (VNLGCDVD), 137-145 (SIRGALVLG), and 150-158 (LAGYQMNFE). A Glycyl lysine isopeptide (Lys-Gly) (interchain with G-Cter in ubiquitin) cross-link involves residue lysine 161. The next 6 membrane-spanning stretches (beta stranded) occupy residues 163–175 (RVTQ…GYKT), 178–185 (FQLHTNVN), 189–198 (EFGGSIYQKV), 202–211 (LETAVNLAWT), 218–227 (RFGIAAKYQI), and 231–238 (ACFSAKVN). Serine 193 carries the phosphoserine; by NEK1 modification. Serine 240 bears the Phosphoserine mark. 242–244 (LIG) provides a ligand contact to NAD(+). Residues 242–251 (LIGLGYTQTL) form a beta stranded membrane-spanning segment. Lysine 252 bears the N6-acetyllysine mark. Residues 254–263 (GIKLTLSALL) form a beta stranded membrane-spanning segment. 260–264 (SALLD) lines the NAD(+) pocket. An N6-acetyllysine; alternate modification is found at lysine 266. Residue lysine 266 forms a Glycyl lysine isopeptide (Lys-Gly) (interchain with G-Cter in ubiquitin); alternate linkage. The chain crosses the membrane as a beta stranded span at residues 273–282 (HKLGLGLEFQ). A Glycyl lysine isopeptide (Lys-Gly) (interchain with G-Cter in ubiquitin) cross-link involves residue lysine 274.

This sequence belongs to the eukaryotic mitochondrial porin family. As to quaternary structure, homodimer and homotrimer; in response to cyclic AMP or calcium; oligomerization is required for scramblase activity. Component of the mitochondrial permeability transition pore complex (mPTPC), at least composed of SPG7, VDAC1 and PPIF. Interacts with SPG7, NIPSNAP2 and SLC25A30. Interacts with hexokinases including HK1. The HK1-VDAC1 complex interacts with ATF2. Interacts with BCL2L1. Interacts with BAK1. Interacts with RTL10/BOP (via BH3 domain). Interacts with amyloid-beta and APP; induces VDAC1 dephosphorylation. Interacts with TMEM41B. Interacts with BCAP31. Interacts with HSPA9; this interaction couples ITPR1 to VDAC1. Phosphorylation at Ser-193 by NEK1 promotes the closed conformational state preventing excessive mitochondrial membrane permeability and subsequent apoptotic cell death after injury. Phosphorylation by the AKT-GSK3B axis stabilizes the protein probably by preventing ubiquitin-mediated proteasomal degradation. In terms of processing, ubiquitinated. Undergoes monoubiquitination and polyubiquitination by PRKN; monoubiquitination at Lys-274 inhibits apoptosis, whereas polyubiquitination leads to its degradation and promotes mitophagy. Deubiquitinated by USP30.

It localises to the mitochondrion outer membrane. The protein localises to the cell membrane. It is found in the membrane raft. It catalyses the reaction chloride(in) = chloride(out). The catalysed reaction is K(+)(in) = K(+)(out). It carries out the reaction ATP(in) = ATP(out). The enzyme catalyses Ca(2+)(in) = Ca(2+)(out). It catalyses the reaction Na(+)(in) = Na(+)(out). The catalysed reaction is Mg(2+)(in) = Mg(2+)(out). It carries out the reaction L-glutamate(out) = L-glutamate(in). The enzyme catalyses dopamine(out) = dopamine(in). It catalyses the reaction acetylcholine(in) = acetylcholine(out). The catalysed reaction is Fe(III)-[cytochrome c](out) = Fe(III)-[cytochrome c](in). It carries out the reaction a 1,2-diacyl-sn-glycero-3-phosphocholine(in) = a 1,2-diacyl-sn-glycero-3-phosphocholine(out). The enzyme catalyses a 1,2-diacyl-sn-glycero-3-phospho-L-serine(in) = a 1,2-diacyl-sn-glycero-3-phospho-L-serine(out). With respect to regulation, inhibited by nitric oxide. Its function is as follows. Non-selective voltage-gated ion channel that mediates the transport of anions and cations through the mitochondrion outer membrane and plasma membrane. The channel at the outer mitochondrial membrane allows diffusion of small hydrophilic molecules; in the plasma membrane it is involved in cell volume regulation and apoptosis. It adopts an open conformation at low or zero membrane potential and a closed conformation at potentials above 30-40 mV. The open state has a weak anion selectivity whereas the closed state is cation-selective. Binds various signaling molecules, including the sphingolipid ceramide, the phospholipid phosphatidylcholine, and the sterols cholesterol and oxysterol. In depolarized mitochondria, acts downstream of PRKN and PINK1 to promote mitophagy or prevent apoptosis; polyubiquitination by PRKN promotes mitophagy, while monoubiquitination by PRKN decreases mitochondrial calcium influx which ultimately inhibits apoptosis. May participate in the formation of the permeability transition pore complex (PTPC) responsible for the release of mitochondrial products that triggers apoptosis. May mediate ATP export from cells. Part of a complex composed of HSPA9, ITPR1 and VDAC1 that regulates mitochondrial calcium-dependent apoptosis by facilitating calcium transport from the ER lumen to the mitochondria intermembrane space thus providing calcium for the downstream calcium channel MCU that directly releases it into mitochondria matrix. Mediates cytochrome c efflux. In terms of biological role, catalyzes the scrambling of phospholipids across the outer mitochondrial membrane; the mechanism is unrelated to channel activity and is capable of translocating both anionic and zwitterionic phospholipids. In Sus scrofa (Pig), this protein is Non-selective voltage-gated ion channel VDAC1.